A 414-amino-acid polypeptide reads, in one-letter code: Tyrosine--tRNA ligase (414 aa).

The short motif at Pro-57–His-66 is the 'HIGH' region element. The 'KMSKS' region signature appears at Lys-241–Ser-245. Residue Lys-244 participates in ATP binding. Residues Val-352–Leu-413 form the S4 RNA-binding domain.

The protein belongs to the class-I aminoacyl-tRNA synthetase family. TyrS type 2 subfamily. In terms of assembly, homodimer.

It is found in the cytoplasm. It carries out the reaction tRNA(Tyr) + L-tyrosine + ATP = L-tyrosyl-tRNA(Tyr) + AMP + diphosphate + H(+). In terms of biological role, catalyzes the attachment of tyrosine to tRNA(Tyr) in a two-step reaction: tyrosine is first activated by ATP to form Tyr-AMP and then transferred to the acceptor end of tRNA(Tyr). The sequence is that of Tyrosine--tRNA ligase from Shouchella clausii (strain KSM-K16) (Alkalihalobacillus clausii).